Here is a 308-residue protein sequence, read N- to C-terminus: Elongation factor Ts (308 aa).

The interval threonine 80–valine 83 is involved in Mg(2+) ion dislocation from EF-Tu.

Belongs to the EF-Ts family.

The protein resides in the cytoplasm. Functionally, associates with the EF-Tu.GDP complex and induces the exchange of GDP to GTP. It remains bound to the aminoacyl-tRNA.EF-Tu.GTP complex up to the GTP hydrolysis stage on the ribosome. The sequence is that of Elongation factor Ts from Agrobacterium fabrum (strain C58 / ATCC 33970) (Agrobacterium tumefaciens (strain C58)).